Consider the following 54-residue polypeptide: Ovomucoid (54 aa).

A Kazal-like domain is found at 4–54 (VDCSDYPKPACTVEYMPLCGSDNKTYDNKCNFCNAVVDSNGTLTLSHFGKC). Disulfide bonds link Cys-6-Cys-36, Cys-14-Cys-33, and Cys-22-Cys-54. N-linked (GlcNAc...) asparagine glycosylation occurs at Asn-43.

It is found in the secreted. This Anser anser anser (Western greylag goose) protein is Ovomucoid.